A 437-amino-acid chain; its full sequence is 3-deoxy-D-manno-octulosonic acid transferase (437 aa).

Residues 16–36 form a helical; Signal-anchor membrane-spanning segment; sequence VVLVCAFVIALPKLLYKMLVY. The active-site Proton acceptor is the E70. CMP-binding positions include 279 to 280, 319 to 321, and 346 to 349; these read PR, IGL, and NLLE.

The protein belongs to the glycosyltransferase group 1 family. Glycosyltransferase 30 subfamily.

It localises to the cell inner membrane. It catalyses the reaction lipid IVA (E. coli) + CMP-3-deoxy-beta-D-manno-octulosonate = alpha-Kdo-(2-&gt;6)-lipid IVA (E. coli) + CMP + H(+). The enzyme catalyses alpha-Kdo-(2-&gt;6)-lipid IVA (E. coli) + CMP-3-deoxy-beta-D-manno-octulosonate = alpha-Kdo-(2-&gt;4)-alpha-Kdo-(2-&gt;6)-lipid IVA (E. coli) + CMP + H(+). It carries out the reaction alpha-Kdo-(2-&gt;4)-alpha-Kdo-(2-&gt;6)-lipid IVA (E. coli) + CMP-3-deoxy-beta-D-manno-octulosonate = alpha-Kdo-(2-&gt;8)-alpha-Kdo-(2-&gt;4)-alpha-Kdo-(2-&gt;6)-lipid IVA (E. coli) + CMP + H(+). It participates in bacterial outer membrane biogenesis; LPS core biosynthesis. Functionally, involved in lipopolysaccharide (LPS) biosynthesis. Catalyzes the transfer of three 3-deoxy-D-manno-octulosonate (Kdo) residues from CMP-Kdo to lipid IV(A), the tetraacyldisaccharide-1,4'-bisphosphate precursor of lipid A. Thus generates the genus-specific LPS epitope of Chlamydia, composed of the trisaccharide alpha-Kdo-(2-&gt;8)-alpha-Kdo-(2-&gt;4)-alpha-Kdo. This Chlamydia pneumoniae (Chlamydophila pneumoniae) protein is 3-deoxy-D-manno-octulosonic acid transferase (waaA).